The following is a 419-amino-acid chain: Potassium/proton antiporter CemA (419 aa).

The next 4 membrane-spanning stretches (helical) occupy residues 196 to 216, 297 to 317, 344 to 364, and 371 to 391; these read LASIQYGFFLLLLPWIVTLLF, IIELITDFIGIFTITVILCIA, ILLITDLCIGFHSPHGWEVLI, and FGFVPNQYITSFFVSTFPVVL.

The protein belongs to the CemA family.

The protein resides in the plastid. It is found in the chloroplast inner membrane. It catalyses the reaction K(+)(in) + H(+)(out) = K(+)(out) + H(+)(in). In terms of biological role, contributes to K(+)/H(+) antiport activity by supporting proton efflux to control proton extrusion and homeostasis in chloroplasts in a light-dependent manner to modulate photosynthesis. Prevents excessive induction of non-photochemical quenching (NPQ) under continuous-light conditions. Indirectly promotes efficient inorganic carbon uptake into chloroplasts. The polypeptide is Potassium/proton antiporter CemA (Chara vulgaris (Common stonewort)).